The sequence spans 93 residues: C-C motif chemokine 17 (93 aa).

Residues 1–23 (MMSLQMLLLAALLLGTSLQHASA) form the signal peptide. 2 disulfide bridges follow: cysteine 33-cysteine 57 and cysteine 34-cysteine 73.

This sequence belongs to the intercrine beta (chemokine CC) family.

It localises to the secreted. In terms of biological role, chemokine, which displays chemotactic activity for T lymphocytes, preferentially Th2 cells, but not monocytes or granulocytes. Therefore plays an important role in a wide range of inflammatory and immunological processes. Acts by binding to CCR4 at T-cell surface. Mediates GM-CSF/CSF2-driven pain and inflammation. In the brain, required to maintain the typical, highly branched morphology of hippocampal microglia under homeostatic conditions. May be important for the appropriate adaptation of microglial morphology and synaptic plasticity to acute lipopolysaccharide (LPS)-induced neuroinflammation. Plays a role in wound healing, mainly by inducing fibroblast migration into the wound. The chain is C-C motif chemokine 17 (Ccl17) from Rattus norvegicus (Rat).